A 257-amino-acid chain; its full sequence is tRNA uridine(34) hydroxylase (257 aa).

Residues 128–222 enclose the Rhodanese domain; that stretch reads NGRRLVMLDA…YFEQVGGEGY (95 aa). Catalysis depends on Cys182, which acts as the Cysteine persulfide intermediate.

Belongs to the TrhO family.

It catalyses the reaction uridine(34) in tRNA + AH2 + O2 = 5-hydroxyuridine(34) in tRNA + A + H2O. Its function is as follows. Catalyzes oxygen-dependent 5-hydroxyuridine (ho5U) modification at position 34 in tRNAs. In Xylella fastidiosa (strain M23), this protein is tRNA uridine(34) hydroxylase.